A 326-amino-acid chain; its full sequence is tRNA uridine(34) hydroxylase (326 aa).

The region spanning 123–217 (SDPDVLLVDT…YLEEVPEENS (95 aa)) is the Rhodanese domain. The Cysteine persulfide intermediate role is filled by Cys-177. The segment covering 276–320 (EEQKSRFREREKQVQLANERGETHVGGDAAKLIEQRKQEKKEKKQ) has biased composition (basic and acidic residues). Positions 276–326 (EEQKSRFREREKQVQLANERGETHVGGDAAKLIEQRKQEKKEKKQQQRSSK) are disordered.

Belongs to the TrhO family.

The catalysed reaction is uridine(34) in tRNA + AH2 + O2 = 5-hydroxyuridine(34) in tRNA + A + H2O. Its function is as follows. Catalyzes oxygen-dependent 5-hydroxyuridine (ho5U) modification at position 34 in tRNAs. The sequence is that of tRNA uridine(34) hydroxylase from Aliivibrio salmonicida (strain LFI1238) (Vibrio salmonicida (strain LFI1238)).